Reading from the N-terminus, the 760-residue chain is E4 SUMO-protein ligase PIAL2 (760 aa).

The interacting domain (IND), required for interaction with MOM1 and PIAL1 stretch occupies residues 143–301; the sequence is IKSPGSTFSQ…GVIEASPDSD (159 aa). The SP-RING-type zinc-finger motif lies at 298–379; the sequence is PDSDIIEGPS…MAKILKDVEH (82 aa). Residues cysteine 329, histidine 331, cysteine 352, and cysteine 355 each coordinate Zn(2+). Residues 440–450 show a composition bias toward basic and acidic residues; that stretch reads GDNKVEDRKPC. Disordered stretches follow at residues 440-471, 492-522, 631-657, and 699-760; these read GDNK…SNDD, LGNT…MSID, GVRG…SVSR, and SQQS…GPTS. Polar residues-rich tracts occupy residues 492-518, 631-653, and 699-729; these read LGNT…SQIP, GVRG…PTVQ, and SQQS…SPFT.

This sequence belongs to the PIAL protein ligase family. Homodimer. Interacts with MOM1 and PIAL1 to form a high molecular mass complex which mediates transcriptional silencing at heterochromatin regions. In terms of tissue distribution, expressed in leaves, stems and flowers, and, at low levels, in siliques and old leaves.

The protein resides in the nucleus. It participates in protein modification; protein sumoylation. Together with MOM1 and PIAL1, regulates transcriptional gene silencing (TGS) independently of changes in DNA methylation. E4-type SUMO ligase that promotes SUMO chain formation in a SCE1-dependent manner and thus contributes to a pathway for proteolytic removal of sumoylation substrates. Involved in stress responses and sulfur metabolism. The sequence is that of E4 SUMO-protein ligase PIAL2 from Arabidopsis thaliana (Mouse-ear cress).